Consider the following 182-residue polypeptide: Cytidylate kinase (182 aa).

Position 7 to 15 (7 to 15) interacts with ATP; it reads GPPGSGKSS.

Belongs to the cytidylate kinase family. Type 2 subfamily.

The protein localises to the cytoplasm. It catalyses the reaction CMP + ATP = CDP + ADP. The enzyme catalyses dCMP + ATP = dCDP + ADP. This Sulfolobus acidocaldarius (strain ATCC 33909 / DSM 639 / JCM 8929 / NBRC 15157 / NCIMB 11770) protein is Cytidylate kinase (cmk).